The primary structure comprises 831 residues: Vi polysaccharide biosynthesis protein TviD (831 aa).

The protein operates within glycan metabolism; Vi-antigen biosynthesis. It participates in capsule biogenesis; capsule polysaccharide biosynthesis. Functionally, may be required for maturation of the Vi polysaccharide. This chain is Vi polysaccharide biosynthesis protein TviD (tviD), found in Salmonella typhi.